Reading from the N-terminus, the 364-residue chain is tRNA-specific 2-thiouridylase MnmA (364 aa).

Residues 13–20 and M39 each bind ATP; that span reads GMSGGVDS. The interval 99 to 101 is interaction with target base in tRNA; the sequence is NPD. Catalysis depends on C104, which acts as the Nucleophile. A disulfide bridge links C104 with C199. G128 contributes to the ATP binding site. Residues 149-151 form an interaction with tRNA region; the sequence is KDQ. C199 functions as the Cysteine persulfide intermediate in the catalytic mechanism. The tract at residues 311 to 312 is interaction with tRNA; sequence RY.

Belongs to the MnmA/TRMU family.

The protein resides in the cytoplasm. It catalyses the reaction S-sulfanyl-L-cysteinyl-[protein] + uridine(34) in tRNA + AH2 + ATP = 2-thiouridine(34) in tRNA + L-cysteinyl-[protein] + A + AMP + diphosphate + H(+). Catalyzes the 2-thiolation of uridine at the wobble position (U34) of tRNA, leading to the formation of s(2)U34. This Alcanivorax borkumensis (strain ATCC 700651 / DSM 11573 / NCIMB 13689 / SK2) protein is tRNA-specific 2-thiouridylase MnmA.